The primary structure comprises 157 residues: SsrA-binding protein (157 aa).

The protein belongs to the SmpB family.

The protein resides in the cytoplasm. Its function is as follows. Required for rescue of stalled ribosomes mediated by trans-translation. Binds to transfer-messenger RNA (tmRNA), required for stable association of tmRNA with ribosomes. tmRNA and SmpB together mimic tRNA shape, replacing the anticodon stem-loop with SmpB. tmRNA is encoded by the ssrA gene; the 2 termini fold to resemble tRNA(Ala) and it encodes a 'tag peptide', a short internal open reading frame. During trans-translation Ala-aminoacylated tmRNA acts like a tRNA, entering the A-site of stalled ribosomes, displacing the stalled mRNA. The ribosome then switches to translate the ORF on the tmRNA; the nascent peptide is terminated with the 'tag peptide' encoded by the tmRNA and targeted for degradation. The ribosome is freed to recommence translation, which seems to be the essential function of trans-translation. The sequence is that of SsrA-binding protein from Levilactobacillus brevis (strain ATCC 367 / BCRC 12310 / CIP 105137 / JCM 1170 / LMG 11437 / NCIMB 947 / NCTC 947) (Lactobacillus brevis).